We begin with the raw amino-acid sequence, 505 residues long: ATP synthase subunit alpha (505 aa).

170–177 (GDRQTGKT) contributes to the ATP binding site.

The protein belongs to the ATPase alpha/beta chains family. As to quaternary structure, F-type ATPases have 2 components, CF(1) - the catalytic core - and CF(0) - the membrane proton channel. CF(1) has five subunits: alpha(3), beta(3), gamma(1), delta(1), epsilon(1). CF(0) has four main subunits: a(1), b(1), b'(1) and c(9-12).

The protein localises to the cellular thylakoid membrane. The catalysed reaction is ATP + H2O + 4 H(+)(in) = ADP + phosphate + 5 H(+)(out). In terms of biological role, produces ATP from ADP in the presence of a proton gradient across the membrane. The alpha chain is a regulatory subunit. This Trichodesmium erythraeum (strain IMS101) protein is ATP synthase subunit alpha.